A 95-amino-acid chain; its full sequence is uncharacterized protein (95 aa).

This is an uncharacterized protein from Methanocaldococcus jannaschii (strain ATCC 43067 / DSM 2661 / JAL-1 / JCM 10045 / NBRC 100440) (Methanococcus jannaschii).